A 112-amino-acid polypeptide reads, in one-letter code: Iron-sulfur cluster assembly protein CyaY (112 aa).

Belongs to the frataxin family.

In terms of biological role, involved in iron-sulfur (Fe-S) cluster assembly. May act as a regulator of Fe-S biogenesis. The protein is Iron-sulfur cluster assembly protein CyaY of Delftia acidovorans (strain DSM 14801 / SPH-1).